Here is a 424-residue protein sequence, read N- to C-terminus: Mitogen-activated protein kinase mpkA (424 aa).

The region spanning 23 to 314 (YNVTKELGQG…VEEALEHPYL (292 aa)) is the Protein kinase domain. ATP contacts are provided by residues 29–37 (LGQGAYGIV) and Lys52. Residues 375-424 (QQIAQQTNVPIPDHQQGGWKQEEPKPQEVHAAGGHVNDLESSLQRGMDVQ) form a disordered region.

It belongs to the protein kinase superfamily. Ser/Thr protein kinase family. In terms of assembly, interacts with flbB, flbC, brlA, and rasB. Interacts with fmqA and fmqC. Interacts with hsp90. The cofactor is Mg(2+). In terms of processing, phosphorylated by the upstreamm MAPKK mkk2. Phosphorylation is induced during asexual development. Phosphorylation is regulated by rlmA.

The catalysed reaction is L-seryl-[protein] + ATP = O-phospho-L-seryl-[protein] + ADP + H(+). It carries out the reaction L-threonyl-[protein] + ATP = O-phospho-L-threonyl-[protein] + ADP + H(+). Its activity is regulated as follows. Activated by threonine and tyrosine phosphorylation by the upstreamm MAPKK mkk2. Mitogen-activated protein kinase; part of cell wall integrity (CWI) signaling pathway composed of pkcA, the bck1-mkk2-mpka MAPK cascade and the downstream rlmA transcription regulator. The CWI signaling pathway regulates cell wall integrity and pyomelanin formation. CWI also controls oxidative stress response, gliotoxin production, iron adaptation and asexual development. Finally, CWI is constitutively required for A.fumigatus to cope with the temperature increase found in the mammalian lung environment, during infection. MpkA positively modulates the expression of fumiquinazoline cluster during conidiogenesis and directly phosphorylates fmqC, and perhaps also fmqA. The sequence is that of Mitogen-activated protein kinase mpkA from Aspergillus fumigatus (strain ATCC MYA-4609 / CBS 101355 / FGSC A1100 / Af293) (Neosartorya fumigata).